The chain runs to 130 residues: Small ribosomal subunit protein uS11 (130 aa).

The protein belongs to the universal ribosomal protein uS11 family. Part of the 30S ribosomal subunit. Interacts with proteins S7 and S18. Binds to IF-3.

In terms of biological role, located on the platform of the 30S subunit, it bridges several disparate RNA helices of the 16S rRNA. Forms part of the Shine-Dalgarno cleft in the 70S ribosome. The polypeptide is Small ribosomal subunit protein uS11 (Rippkaea orientalis (strain PCC 8801 / RF-1) (Cyanothece sp. (strain PCC 8801))).